We begin with the raw amino-acid sequence, 251 residues long: Large ribosomal subunit protein uL16m (251 aa).

A mitochondrion-targeting transit peptide spans 1 to 29; it reads MWRLLTRAPAPLWRMHFSDTWAALPTSAG.

It belongs to the universal ribosomal protein uL16 family. As to quaternary structure, component of the mitochondrial ribosome large subunit (39S) which comprises a 16S rRNA and about 50 distinct proteins.

The protein resides in the mitochondrion. The chain is Large ribosomal subunit protein uL16m (Mrpl16) from Rattus norvegicus (Rat).